A 461-amino-acid polypeptide reads, in one-letter code: Pancreatic triacylglycerol lipase (461 aa).

Residues 1–12 (WTLSLLLGAVVG) form the signal peptide. 2 disulfides stabilise this stretch: Cys-16–Cys-22 and Cys-103–Cys-114. Ser-165 (nucleophile) is an active-site residue. The active-site Charge relay system is Asp-189. Ca(2+)-binding residues include Glu-200, Arg-203, Asp-205, and Asp-208. A disulfide bridge links Cys-250 with Cys-274. The Charge relay system role is filled by His-276. Cystine bridges form between Cys-298–Cys-309, Cys-312–Cys-317, and Cys-445–Cys-461. In terms of domain architecture, PLAT spans 351-461 (WRYRVDVTLS…EDVLLTLTAC (111 aa)).

Belongs to the AB hydrolase superfamily. Lipase family. In terms of assembly, forms a 1:1 stoichiometric complex with (pro)colipase/CLPS.

It localises to the secreted. The enzyme catalyses a triacylglycerol + H2O = a diacylglycerol + a fatty acid + H(+). The catalysed reaction is 1,2,3-tributanoylglycerol + H2O = dibutanoylglycerol + butanoate + H(+). It carries out the reaction 1,2,3-tri-(9Z-octadecenoyl)-glycerol + H2O = di-(9Z)-octadecenoylglycerol + (9Z)-octadecenoate + H(+). It catalyses the reaction all-trans-retinyl hexadecanoate + H2O = all-trans-retinol + hexadecanoate + H(+). The enzyme catalyses 1,2-di-(9Z-octadecenoyl)-glycerol + H2O = (9Z-octadecenoyl)-glycerol + (9Z)-octadecenoate + H(+). Its activity is regulated as follows. Inhibited by bile salts, is reactivated by (pro)colipase/CLPS. In terms of biological role, plays an important role in fat metabolism. It preferentially splits the esters of long-chain fatty acids at positions 1 and 3, producing mainly 2-monoacylglycerol and free fatty acids, and shows considerably higher activity against insoluble emulsified substrates than against soluble ones. In Equus caballus (Horse), this protein is Pancreatic triacylglycerol lipase (PNLIP).